Reading from the N-terminus, the 267-residue chain is tRNA-cytidine(32) 2-sulfurtransferase 1 (267 aa).

The PP-loop motif signature appears at 42 to 47 (SGGKDS). Cys-117, Cys-120, and Cys-208 together coordinate [4Fe-4S] cluster.

This sequence belongs to the TtcA family. Homodimer. Mg(2+) serves as cofactor. Requires [4Fe-4S] cluster as cofactor.

The protein resides in the cytoplasm. It catalyses the reaction cytidine(32) in tRNA + S-sulfanyl-L-cysteinyl-[cysteine desulfurase] + AH2 + ATP = 2-thiocytidine(32) in tRNA + L-cysteinyl-[cysteine desulfurase] + A + AMP + diphosphate + H(+). The protein operates within tRNA modification. In terms of biological role, catalyzes the ATP-dependent 2-thiolation of cytidine in position 32 of tRNA, to form 2-thiocytidine (s(2)C32). The sulfur atoms are provided by the cysteine/cysteine desulfurase (IscS) system. The sequence is that of tRNA-cytidine(32) 2-sulfurtransferase 1 from Francisella tularensis subsp. novicida (strain U112).